A 340-amino-acid polypeptide reads, in one-letter code: DNA-directed RNA polymerase subunit alpha (340 aa).

The interval 1–236 (MSVIQKNWQE…DQLQLFINFE (236 aa)) is alpha N-terminal domain (alpha-NTD). Residues 252–340 (FNKNLLRKVD…DLAKKLEEPY (89 aa)) are alpha C-terminal domain (alpha-CTD).

This sequence belongs to the RNA polymerase alpha chain family. In terms of assembly, homodimer. The RNAP catalytic core consists of 2 alpha, 1 beta, 1 beta' and 1 omega subunit. When a sigma factor is associated with the core the holoenzyme is formed, which can initiate transcription.

The enzyme catalyses RNA(n) + a ribonucleoside 5'-triphosphate = RNA(n+1) + diphosphate. Functionally, DNA-dependent RNA polymerase catalyzes the transcription of DNA into RNA using the four ribonucleoside triphosphates as substrates. The polypeptide is DNA-directed RNA polymerase subunit alpha (Rhodospirillum rubrum (strain ATCC 11170 / ATH 1.1.1 / DSM 467 / LMG 4362 / NCIMB 8255 / S1)).